The following is a 401-amino-acid chain: Argininosuccinate synthase (401 aa).

Position 9 to 17 (9 to 17 (AYSGGLDTS)) interacts with ATP. L-citrulline is bound at residue Tyr86. Gly116 provides a ligand contact to ATP. Thr118, Asn122, and Asp123 together coordinate L-aspartate. Asn122 is an L-citrulline binding site. 5 residues coordinate L-citrulline: Arg126, Ser174, Ser183, Glu259, and Tyr271.

Belongs to the argininosuccinate synthase family. Type 1 subfamily. As to quaternary structure, homotetramer.

It is found in the cytoplasm. It catalyses the reaction L-citrulline + L-aspartate + ATP = 2-(N(omega)-L-arginino)succinate + AMP + diphosphate + H(+). It functions in the pathway amino-acid biosynthesis; L-arginine biosynthesis; L-arginine from L-ornithine and carbamoyl phosphate: step 2/3. The sequence is that of Argininosuccinate synthase from Bacillus thuringiensis subsp. konkukian (strain 97-27).